Reading from the N-terminus, the 1603-residue chain is DNA polymerase theta (1603 aa).

The Helicase ATP-binding domain occupies 38-208; sequence EARQFEDQHL…WLDGAKVFEA (171 aa). ATP is bound at residue 51 to 58; the sequence is APTSAGKS. The DEAH box motif lies at 149–152; the sequence is DEMH. The Helicase C-terminal domain occupies 283–434; that stretch reads TDSSLLEILK…GVLTRKRDAE (152 aa).

Belongs to the DNA polymerase type-A family.

It is found in the nucleus. It carries out the reaction DNA(n) + a 2'-deoxyribonucleoside 5'-triphosphate = DNA(n+1) + diphosphate. DNA polymerase that promotes microhomology-mediated end-joining (MMEJ), an alternative non-homologous end-joining (NHEJ) machinery triggered in response to double-strand breaks in DNA. MMEJ is an error-prone repair pathway that produces deletions of sequences from the strand being repaired and promotes genomic rearrangements, such as telomere fusions. Required to prevent extensive loss of sequences near G-quadruplex (G4) DNA sites, which are prone to cause genome alterations, by generating deletions. In Caenorhabditis elegans, this protein is DNA polymerase theta.